Here is a 251-residue protein sequence, read N- to C-terminus: Triosephosphate isomerase (251 aa).

A substrate-binding site is contributed by 9–11 (NWK). The Electrophile role is filled by histidine 95. Catalysis depends on glutamate 167, which acts as the Proton acceptor. Residues glycine 173, serine 213, and 234-235 (GG) contribute to the substrate site.

It belongs to the triosephosphate isomerase family. As to quaternary structure, homodimer.

The protein resides in the cytoplasm. The catalysed reaction is D-glyceraldehyde 3-phosphate = dihydroxyacetone phosphate. Its pathway is carbohydrate biosynthesis; gluconeogenesis. It participates in carbohydrate degradation; glycolysis; D-glyceraldehyde 3-phosphate from glycerone phosphate: step 1/1. In terms of biological role, involved in the gluconeogenesis. Catalyzes stereospecifically the conversion of dihydroxyacetone phosphate (DHAP) to D-glyceraldehyde-3-phosphate (G3P). This Geotalea uraniireducens (strain Rf4) (Geobacter uraniireducens) protein is Triosephosphate isomerase.